Consider the following 338-residue polypeptide: Glutamate/glutamine/aspartate/asparagine-binding protein BztA (338 aa).

Residues 1-22 form the signal peptide; sequence MKKSAFFGSVALAALVAGAASA.

This sequence belongs to the bacterial solute-binding protein 3 family.

The protein localises to the periplasm. Its function is as follows. Part of a binding-protein-dependent transport system for glutamate, glutamine, aspartate and asparagine. The protein is Glutamate/glutamine/aspartate/asparagine-binding protein BztA (bztA) of Rhodobacter capsulatus (strain ATCC BAA-309 / NBRC 16581 / SB1003).